Reading from the N-terminus, the 151-residue chain is UPF0178 protein YaiI (151 aa).

Belongs to the UPF0178 family.

This is UPF0178 protein YaiI from Salmonella arizonae (strain ATCC BAA-731 / CDC346-86 / RSK2980).